The primary structure comprises 231 residues: Small ribosomal subunit protein uS3c (231 aa).

In terms of domain architecture, KH type-2 spans 39–123 (LRNFIKKKYI…HLRLSVKPLR (85 aa)).

Belongs to the universal ribosomal protein uS3 family. As to quaternary structure, part of the 30S ribosomal subunit.

It localises to the plastid. Its subcellular location is the chloroplast. This Chlorella vulgaris (Green alga) protein is Small ribosomal subunit protein uS3c (rps3).